Here is a 912-residue protein sequence, read N- to C-terminus: Protein translocase subunit SecA (912 aa).

Residues Gln87, 105 to 109, and Asp509 each bind ATP; that span reads GEGKT. Positions 847–859 are enriched in basic and acidic residues; sequence RERAVSQPVHEDA. A disordered region spans residues 847–912; the sequence is RERAVSQPVH…KYKHCHGKLN (66 aa). Over residues 867 to 878 the composition is skewed to acidic residues; the sequence is AESEEASGESAD. Residues 881-892 are compositionally biased toward basic and acidic residues; the sequence is QPVRRDGPKVGR. 4 residues coordinate Zn(2+): Cys896, Cys898, Cys907, and His908. Residues 902–912 are compositionally biased toward basic residues; it reads KKYKHCHGKLN.

It belongs to the SecA family. Monomer and homodimer. Part of the essential Sec protein translocation apparatus which comprises SecA, SecYEG and auxiliary proteins SecDF-YajC and YidC. Requires Zn(2+) as cofactor.

The protein resides in the cell inner membrane. It is found in the cytoplasm. It carries out the reaction ATP + H2O + cellular proteinSide 1 = ADP + phosphate + cellular proteinSide 2.. In terms of biological role, part of the Sec protein translocase complex. Interacts with the SecYEG preprotein conducting channel. Has a central role in coupling the hydrolysis of ATP to the transfer of proteins into and across the cell membrane, serving both as a receptor for the preprotein-SecB complex and as an ATP-driven molecular motor driving the stepwise translocation of polypeptide chains across the membrane. The sequence is that of Protein translocase subunit SecA from Chromohalobacter salexigens (strain ATCC BAA-138 / DSM 3043 / CIP 106854 / NCIMB 13768 / 1H11).